A 194-amino-acid chain; its full sequence is Endo-1,4-beta-xylanase (194 aa).

Gly-1 is modified (N-acetylglycine). In terms of domain architecture, GH11 spans 1-191; sequence GTTPNSEGWH…SSGYARITVA (191 aa). The active-site Nucleophile is the Glu-86. Cys-110 and Cys-154 are disulfide-bonded. Glu-178 acts as the Proton donor in catalysis.

Belongs to the glycosyl hydrolase 11 (cellulase G) family.

The enzyme catalyses Endohydrolysis of (1-&gt;4)-beta-D-xylosidic linkages in xylans.. It participates in glycan degradation; xylan degradation. The protein is Endo-1,4-beta-xylanase of Byssochlamys spectabilis (Paecilomyces variotii).